Reading from the N-terminus, the 448-residue chain is Trigger factor (448 aa).

The PPIase FKBP-type domain maps to 162 to 243; it reads GDFVQIDLNA…VRTVKEKELP (82 aa).

Belongs to the FKBP-type PPIase family. Tig subfamily.

Its subcellular location is the cytoplasm. It catalyses the reaction [protein]-peptidylproline (omega=180) = [protein]-peptidylproline (omega=0). Involved in protein export. Acts as a chaperone by maintaining the newly synthesized protein in an open conformation. Functions as a peptidyl-prolyl cis-trans isomerase. This Salinispora arenicola (strain CNS-205) protein is Trigger factor.